Consider the following 160-residue polypeptide: Cytochrome b6-f complex subunit 4 (160 aa).

Transmembrane regions (helical) follow at residues Leu36 to Val56, Leu95 to Glu115, and Pro127 to Ala147.

The protein belongs to the cytochrome b family. PetD subfamily. As to quaternary structure, the 4 large subunits of the cytochrome b6-f complex are cytochrome b6, subunit IV (17 kDa polypeptide, petD), cytochrome f and the Rieske protein, while the 4 small subunits are petG, petL, petM and petN. The complex functions as a dimer.

It localises to the plastid. Its subcellular location is the chloroplast thylakoid membrane. In terms of biological role, component of the cytochrome b6-f complex, which mediates electron transfer between photosystem II (PSII) and photosystem I (PSI), cyclic electron flow around PSI, and state transitions. In Guillardia theta (Cryptophyte), this protein is Cytochrome b6-f complex subunit 4.